A 91-amino-acid chain; its full sequence is MKISAAVLTVVLMAASLCAPASASPNGSDTIPCCFAYLSAVLPRAHVKEYFYTSSKCSNFAVVFVTRRNRQVCANPKKKWVQEYINYLELK.

The N-terminal stretch at 1 to 23 (MKISAAVLTVVLMAASLCAPASA) is a signal peptide. 2 disulfides stabilise this stretch: C33–C57 and C34–C73.

The protein belongs to the intercrine beta (chemokine CC) family.

It is found in the secreted. Chemoattractant for blood monocytes, memory T-helper cells and eosinophils. Causes the release of histamine from basophils and activates eosinophils. May activate several chemokine receptors including CCR1, CCR3, CCR4 and CCR5. May also be an agonist of the G protein-coupled receptor GPR75. Together with GPR75, may play a role in neuron survival through activation of a downstream signaling pathway involving the PI3, Akt and MAP kinases. By activating GPR75 may also play a role in insulin secretion by islet cells. In Sigmodon hispidus (Hispid cotton rat), this protein is C-C motif chemokine 5 (CCL5).